The chain runs to 296 residues: Nucleotide-binding protein Spy49_0545 (296 aa).

13–20 contributes to the ATP binding site; that stretch reads GMSGAGKT. Residue 63–66 coordinates GTP; that stretch reads DMRS.

It belongs to the RapZ-like family.

In terms of biological role, displays ATPase and GTPase activities. This Streptococcus pyogenes serotype M49 (strain NZ131) protein is Nucleotide-binding protein Spy49_0545.